A 496-amino-acid polypeptide reads, in one-letter code: Glycerol kinase (496 aa).

Thr-11 lines the ADP pocket. Thr-11, Thr-12, and Ser-13 together coordinate ATP. Thr-11 serves as a coordination point for sn-glycerol 3-phosphate. Arg-15 contacts ADP. Residues Arg-81, Glu-82, Tyr-133, and Asp-242 each contribute to the sn-glycerol 3-phosphate site. Glycerol-binding residues include Arg-81, Glu-82, Tyr-133, Asp-242, and Gln-243. Residues Thr-264 and Gly-307 each coordinate ADP. Positions 264, 307, 311, and 408 each coordinate ATP. Positions 408 and 412 each coordinate ADP.

Belongs to the FGGY kinase family.

It catalyses the reaction glycerol + ATP = sn-glycerol 3-phosphate + ADP + H(+). It participates in polyol metabolism; glycerol degradation via glycerol kinase pathway; sn-glycerol 3-phosphate from glycerol: step 1/1. Its activity is regulated as follows. Inhibited by fructose 1,6-bisphosphate (FBP). Key enzyme in the regulation of glycerol uptake and metabolism. Catalyzes the phosphorylation of glycerol to yield sn-glycerol 3-phosphate. The protein is Glycerol kinase of Aromatoleum aromaticum (strain DSM 19018 / LMG 30748 / EbN1) (Azoarcus sp. (strain EbN1)).